A 149-amino-acid polypeptide reads, in one-letter code: Secreted RxLR effector protein 17 (149 aa).

Residues Met1 to Ala24 form the signal peptide. The short motif at Arg52–Arg78 is the RxLR-dEER element.

This sequence belongs to the RxLR effector family.

Its subcellular location is the secreted. It localises to the host cytoplasm. The protein localises to the host nucleus. Functionally, effector that acts as a broad suppressor of cell death to interrupt plant immunity. Inhibits cell death induced by cell death-inducing proteins, including the PAMP elicitor INF1 from P.infestans. The protein is Secreted RxLR effector protein 17 of Plasmopara viticola (Downy mildew of grapevine).